Here is a 563-residue protein sequence, read N- to C-terminus: Beta-catenin-like protein 1 (563 aa).

Met-1 carries the N-acetylmethionine modification. Residues 1–49 form a disordered region; it reads MDVGELLSYQPNRGTKRPRDDEEEEQKMRRKQTGTRERGRYREEEMTVV. A Nuclear localization signal motif is present at residues 16 to 33; the sequence is KRPRDDEEEEQKMRRKQT. Residues 34–45 show a composition bias toward basic and acidic residues; sequence GTRERGRYREEE. HEAT repeat units lie at residues 79–129 and 134–176; these read ESSV…VVAT and YHLL…TLHE. Lys-91 is modified (N6-acetyllysine). A Nuclear export signal (NES) motif is present at residues 130–140; the sequence is MPDLYHLLVEL. ARM repeat units follow at residues 178-228, 229-273, 274-323, 325-363, and 364-417; these read EEGA…MAEF, RPEM…LQDN, DENR…CLML, SNRERFLKGEGLQLMNLMLREKKISRSSALKVLDHAMIG, and PEGT…LLRN. Residue Ser-389 is modified to Phosphoserine. The stretch at 476-540 forms a coiled coil; the sequence is DTEEEFYLRR…HIIKEYAENI (65 aa). Residue Ser-545 is modified to Phosphoserine.

Component of the PRP19-CDC5L splicing complex composed of a core complex comprising a homotetramer of PRPF19, CDC5L, PLRG1 and BCAS2, and at least three less stably associated proteins CTNNBL1, CWC15 and HSPA8. Interacts directly with CWC15 and CDC5L in the complex. Interacts with AICDA; the interaction is important for the antibody diversification activity of AICDA. Interacts with PRPF31 (via its NLS). Interacts (via its N-terminal NLS) with KPNA1 and KPNA2. In terms of tissue distribution, widely expressed with highest levels in skeletal muscle, placenta, heart, spleen, testis and thyroid.

It localises to the nucleus. It is found in the cytoplasm. Functionally, component of the PRP19-CDC5L complex that forms an integral part of the spliceosome and is required for activating pre-mRNA splicing. Participates in AID/AICDA-mediated somatic hypermutation (SHM) and class-switch recombination (CSR), 2 processes resulting in the production of high-affinity, mutated isotype-switched antibodies. The sequence is that of Beta-catenin-like protein 1 (CTNNBL1) from Homo sapiens (Human).